A 147-amino-acid chain; its full sequence is Hemoglobin subunit beta (147 aa).

Valine 2 carries the post-translational modification N-acetylvaline. The Globin domain occupies 3–147 (HLTAEEKSAV…VANALAHKYH (145 aa)). Threonine 13 bears the Phosphothreonine mark. Phosphoserine is present on serine 45. At lysine 60 the chain carries N6-acetyllysine. A heme b-binding site is contributed by histidine 64. The residue at position 83 (lysine 83) is an N6-acetyllysine. A heme b-binding site is contributed by histidine 93. At cysteine 94 the chain carries S-nitrosocysteine. Position 145 is an N6-acetyllysine (lysine 145).

It belongs to the globin family. Heterotetramer of two alpha chains and two beta chains. Red blood cells.

Its function is as follows. Involved in oxygen transport from the lung to the various peripheral tissues. The chain is Hemoglobin subunit beta (HBB) from Sapajus apella (Brown-capped capuchin).